The sequence spans 420 residues: Proteasome-activating nucleotidase (420 aa).

Residues 1–25 (MRSHLVKPGSVYDGIEPGELGETTE) form a disordered region. The stretch at 22–79 (ETTESVQDRVRQLESRNSFLEEQCSQIESEKRYLENQKIKYEREIRKLQSELDRMKTS) forms a coiled coil. ATP is bound by residues 203 to 208 (GTGKTL) and His-342. The docks into pockets in the proteasome alpha-ring to cause gate opening stretch occupies residues 418 to 420 (MFV).

Belongs to the AAA ATPase family. As to quaternary structure, homohexamer. The hexameric complex has a two-ring architecture resembling a top hat that caps the 20S proteasome core at one or both ends. Upon ATP-binding, the C-terminus of PAN interacts with the alpha-rings of the proteasome core by binding to the intersubunit pockets.

The protein resides in the cytoplasm. Its function is as follows. ATPase which is responsible for recognizing, binding, unfolding and translocation of substrate proteins into the archaeal 20S proteasome core particle. Is essential for opening the gate of the 20S proteasome via an interaction with its C-terminus, thereby allowing substrate entry and access to the site of proteolysis. Thus, the C-termini of the proteasomal ATPase function like a 'key in a lock' to induce gate opening and therefore regulate proteolysis. Unfolding activity requires energy from ATP hydrolysis, whereas ATP binding alone promotes ATPase-20S proteasome association which triggers gate opening, and supports translocation of unfolded substrates. The sequence is that of Proteasome-activating nucleotidase from Methanosarcina mazei (strain ATCC BAA-159 / DSM 3647 / Goe1 / Go1 / JCM 11833 / OCM 88) (Methanosarcina frisia).